Here is a 448-residue protein sequence, read N- to C-terminus: Exodeoxyribonuclease 7 large subunit (448 aa).

The protein belongs to the XseA family. Heterooligomer composed of large and small subunits.

The protein resides in the cytoplasm. The enzyme catalyses Exonucleolytic cleavage in either 5'- to 3'- or 3'- to 5'-direction to yield nucleoside 5'-phosphates.. Its function is as follows. Bidirectionally degrades single-stranded DNA into large acid-insoluble oligonucleotides, which are then degraded further into small acid-soluble oligonucleotides. The protein is Exodeoxyribonuclease 7 large subunit of Shewanella sp. (strain ANA-3).